We begin with the raw amino-acid sequence, 340 residues long: Oxygen-dependent coproporphyrinogen-III oxidase (340 aa).

The segment covering 1 to 14 (MTVSPTTQPQTNHS) has biased composition (polar residues). Residues 1 to 22 (MTVSPTTQPQTNHSLPPADAKQ) form a disordered region. Ser-109 provides a ligand contact to substrate. A divalent metal cation-binding residues include His-113 and His-123. His-123 serves as the catalytic Proton donor. 125-127 (NYR) contacts substrate. Residues His-157 and His-187 each contribute to the a divalent metal cation site. The important for dimerization stretch occupies residues 278–313 (YVEFNLVYDRGTIFGLQTNGRTESILMSLPPLVRWQ). 296-298 (NGR) contributes to the substrate binding site.

Belongs to the aerobic coproporphyrinogen-III oxidase family. As to quaternary structure, homodimer. It depends on a divalent metal cation as a cofactor.

The protein localises to the cytoplasm. It carries out the reaction coproporphyrinogen III + O2 + 2 H(+) = protoporphyrinogen IX + 2 CO2 + 2 H2O. The protein operates within porphyrin-containing compound metabolism; protoporphyrin-IX biosynthesis; protoporphyrinogen-IX from coproporphyrinogen-III (O2 route): step 1/1. In terms of biological role, involved in the heme and chlorophyll biosynthesis. Catalyzes the aerobic oxidative decarboxylation of propionate groups of rings A and B of coproporphyrinogen-III to yield the vinyl groups in protoporphyrinogen-IX. This is Oxygen-dependent coproporphyrinogen-III oxidase from Synechocystis sp. (strain ATCC 27184 / PCC 6803 / Kazusa).